The chain runs to 442 residues: Protein phosphatase 2C 3 (442 aa).

Residues 30–100 form a disordered region; sequence RFRMSPSEMN…VSISDGNSSV (71 aa). Residues 79 to 90 are compositionally biased toward acidic residues; that stretch reads PEEESVSLEDSD. Positions 120-433 constitute a PPM-type phosphatase domain; that stretch reads RYGVASVCGR…DNVSVVVIDL (314 aa). The Mn(2+) site is built by D162, G163, and D339. Positions 363-401 are disordered; that stretch reads GRGRRRGETQTPGRRSEEEGKEEEEKVVGSRKNGKRGEI. A compositionally biased stretch (basic and acidic residues) spans 376–390; that stretch reads RRSEEEGKEEEEKVV. D424 provides a ligand contact to Mn(2+).

The protein belongs to the PP2C family. Part of a K(+)-channel calcium-sensing kinase/phosphatase complex composed by a calcium sensor CBL (CBL1, CBL2, CBL3 or CBL9), a kinase CIPK (CIPK6, CIPK16 or CIPK23), a phosphatase PP2C (AIP1) and a K(+)-channel (AKT1). Interacts with AKT1 and CIPK23. Interacts with PYL8/RCAR3 in an abscisic acid-independent. Interacts with PYR1/RCAR11 in an abscisic acid-dependent manner. The cofactor is Mg(2+). Mn(2+) is required as a cofactor. In terms of tissue distribution, expressed in shoot meristem, vascular tissues of cotyledons, and in primary roots surrounding the root meristem. Highly expressed in seeds.

The protein localises to the cell membrane. The protein resides in the cytoplasm. It is found in the nucleus. The catalysed reaction is O-phospho-L-seryl-[protein] + H2O = L-seryl-[protein] + phosphate. It carries out the reaction O-phospho-L-threonyl-[protein] + H2O = L-threonyl-[protein] + phosphate. Functionally, involved in the negative regulation of the K(+) potassium channel AKT1 by its dephosphorylation, antagonistically to CIPK proteins (e.g. CIPK23). Functions as a positive regulator of abscisic acid-mediated cell signaling during seedling growth. Involved in the regulation of seed dormancy. Acts as a negative regulator of seed dormancy by inhibiting abscisic signaling and subsequently activating gibberellic acid signaling. This is Protein phosphatase 2C 3 from Arabidopsis thaliana (Mouse-ear cress).